The sequence spans 205 residues: Large ribosomal subunit protein uL3 (205 aa).

This sequence belongs to the universal ribosomal protein uL3 family. In terms of assembly, part of the 50S ribosomal subunit. Forms a cluster with proteins L14 and L19.

Functionally, one of the primary rRNA binding proteins, it binds directly near the 3'-end of the 23S rRNA, where it nucleates assembly of the 50S subunit. This Porphyromonas gingivalis (strain ATCC 33277 / DSM 20709 / CIP 103683 / JCM 12257 / NCTC 11834 / 2561) protein is Large ribosomal subunit protein uL3.